Reading from the N-terminus, the 117-residue chain is Cell division protein FtsB (117 aa).

The Cytoplasmic portion of the chain corresponds to 1-6; that stretch reads MRDWRW. A helical transmembrane segment spans residues 7 to 24; it reads MLLVLALLLGWLQYRFWF. At 25 to 117 the chain is on the periplasmic side; that stretch reads GPGNSGEVMM…QVGEHPADVP (93 aa). Residues 29–69 are a coiled coil; sequence SGEVMMLEAQVTNQERDNEGLQQRNDALAAEVKDLKEGQSA.

The protein belongs to the FtsB family. In terms of assembly, part of a complex composed of FtsB, FtsL and FtsQ.

Its subcellular location is the cell inner membrane. Its function is as follows. Essential cell division protein. May link together the upstream cell division proteins, which are predominantly cytoplasmic, with the downstream cell division proteins, which are predominantly periplasmic. The sequence is that of Cell division protein FtsB from Stenotrophomonas maltophilia (strain R551-3).